The sequence spans 127 residues: Fluoride-specific ion channel FluC (127 aa).

4 helical membrane-spanning segments follow: residues 7–27, 31–51, 68–88, and 97–117; these read LLVALGGALGSLLRYGLGAWV, LGAGFPWSTLFVNALGSFLIG, LFLAVGVLGGFTTFSSLSYET, and VGKALLYAFGSLFLGLLLAFL. Na(+) is bound by residues G76 and T79.

This sequence belongs to the fluoride channel Fluc/FEX (TC 1.A.43) family.

The protein resides in the cell inner membrane. It catalyses the reaction fluoride(in) = fluoride(out). Its activity is regulated as follows. Na(+) is not transported, but it plays an essential structural role and its presence is essential for fluoride channel function. Functionally, fluoride-specific ion channel. Important for reducing fluoride concentration in the cell, thus reducing its toxicity. This is Fluoride-specific ion channel FluC from Thermus thermophilus (strain ATCC BAA-163 / DSM 7039 / HB27).